Consider the following 202-residue polypeptide: Holliday junction branch migration complex subunit RuvA (202 aa).

The interval 1-65 (MIAYVEGRVA…EDALELFGFS (65 aa)) is domain I. Residues 66–144 (TWDERQTFMV…VEDLPAGLVL (79 aa)) are domain II. The interval 145-155 (AGGAAPGGVFR) is flexible linker. A domain III region spans residues 155–202 (RDALAGLGNLGYLEDEAAPVLKEVLKAEPDLDVAGALRAALKALARGR).

This sequence belongs to the RuvA family. In terms of assembly, homotetramer. Forms an RuvA(8)-RuvB(12)-Holliday junction (HJ) complex. HJ DNA is sandwiched between 2 RuvA tetramers; dsDNA enters through RuvA and exits via RuvB. An RuvB hexamer assembles on each DNA strand where it exits the tetramer. Each RuvB hexamer is contacted by two RuvA subunits (via domain III) on 2 adjacent RuvB subunits; this complex drives branch migration. In the full resolvosome a probable DNA-RuvA(4)-RuvB(12)-RuvC(2) complex forms which resolves the HJ.

The protein resides in the cytoplasm. The RuvA-RuvB-RuvC complex processes Holliday junction (HJ) DNA during genetic recombination and DNA repair, while the RuvA-RuvB complex plays an important role in the rescue of blocked DNA replication forks via replication fork reversal (RFR). RuvA specifically binds to HJ cruciform DNA, conferring on it an open structure. The RuvB hexamer acts as an ATP-dependent pump, pulling dsDNA into and through the RuvAB complex. HJ branch migration allows RuvC to scan DNA until it finds its consensus sequence, where it cleaves and resolves the cruciform DNA. The polypeptide is Holliday junction branch migration complex subunit RuvA (Nitratidesulfovibrio vulgaris (strain DSM 19637 / Miyazaki F) (Desulfovibrio vulgaris)).